A 193-amino-acid chain; its full sequence is Rho-related GTP-binding protein RhoA-C (193 aa).

Residues 12–19 (GDGACGKT), 30–37 (FPEVYVPT), 59–63 (DTAGQ), 117–120 (NKKD), and 160–162 (SAK) contribute to the GTP site. Tyr34 is a glycosylation site ((Microbial infection) O-linked (GlcNAc) tyrosine; by Yersinia Afp18). Residue Cys190 is modified to Cysteine methyl ester. Cys190 carries the S-geranylgeranyl cysteine lipid modification. Positions 191 to 193 (LLL) are cleaved as a propeptide — removed in mature form.

Belongs to the small GTPase superfamily. Rho family. Post-translationally, (Microbial infection) Glycosylated at Tyr-34 by Yersinia ruckeri toxin Afp18. Mono-O-GlcNAcylation by Afp18 inhibits RhoA activation by guanine nucleotide exchange factors and blocks RhoA signaling.

The protein resides in the cell membrane. Functionally, regulates a signal transduction pathway linking plasma membrane receptors to the assembly of focal adhesions and actin stress fibers. This chain is Rho-related GTP-binding protein RhoA-C, found in Danio rerio (Zebrafish).